Here is a 117-residue protein sequence, read N- to C-terminus: Large ribosomal subunit protein uL22 (117 aa).

Belongs to the universal ribosomal protein uL22 family. In terms of assembly, part of the 50S ribosomal subunit.

This protein binds specifically to 23S rRNA; its binding is stimulated by other ribosomal proteins, e.g. L4, L17, and L20. It is important during the early stages of 50S assembly. It makes multiple contacts with different domains of the 23S rRNA in the assembled 50S subunit and ribosome. Functionally, the globular domain of the protein is located near the polypeptide exit tunnel on the outside of the subunit, while an extended beta-hairpin is found that lines the wall of the exit tunnel in the center of the 70S ribosome. The chain is Large ribosomal subunit protein uL22 from Chlorobium phaeobacteroides (strain BS1).